The sequence spans 344 residues: uncharacterized protein (344 aa).

The next 5 helical transmembrane spans lie at 53-73 (FVVG…VSVW), 84-104 (WPIL…GYNI), 153-173 (IYPL…LYLL), 189-209 (FGAW…LEML), and 275-295 (IASE…VGVF).

This sequence belongs to the steroid 5-alpha reductase family.

It localises to the endoplasmic reticulum membrane. This is an uncharacterized protein from Schizosaccharomyces pombe (strain 972 / ATCC 24843) (Fission yeast).